The sequence spans 296 residues: Glycine--tRNA ligase alpha subunit (296 aa).

Belongs to the class-II aminoacyl-tRNA synthetase family. As to quaternary structure, tetramer of two alpha and two beta subunits.

Its subcellular location is the cytoplasm. The catalysed reaction is tRNA(Gly) + glycine + ATP = glycyl-tRNA(Gly) + AMP + diphosphate. The chain is Glycine--tRNA ligase alpha subunit from Listeria monocytogenes serotype 4b (strain CLIP80459).